A 388-amino-acid chain; its full sequence is Putative membrane protein MJ1562 (388 aa).

The next 6 membrane-spanning stretches (helical) occupy residues 22–42, 219–239, 246–266, 273–293, 320–340, and 351–371; these read FLML…ATNV, SQSF…IIYF, IMPL…MGLL, ATAG…IHLM, AVMA…LAPL, and ALGI…LIVI.

This sequence belongs to the resistance-nodulation-cell division (RND) (TC 2.A.6) family. MmpL subfamily.

The protein localises to the cell membrane. This chain is Putative membrane protein MJ1562, found in Methanocaldococcus jannaschii (strain ATCC 43067 / DSM 2661 / JAL-1 / JCM 10045 / NBRC 100440) (Methanococcus jannaschii).